The primary structure comprises 368 residues: GDSL esterase/lipase At4g16230 (368 aa).

An N-terminal signal peptide occupies residues 1–24 (MSLLVFLCQIIVLSVLFFSEVCLA). The active-site Nucleophile is Ser-37. Asn-117 and Asn-286 each carry an N-linked (GlcNAc...) asparagine glycan. Residues Asp-329 and His-332 contribute to the active site.

This sequence belongs to the 'GDSL' lipolytic enzyme family.

The protein resides in the secreted. The sequence is that of GDSL esterase/lipase At4g16230 from Arabidopsis thaliana (Mouse-ear cress).